A 50-amino-acid polypeptide reads, in one-letter code: Inducible serine protease inhibitor 1 (50 aa).

Positions 1–27 are disordered; it reads DLVXGTNFXKNNPXSTRVAANSXRSPS. Polar residues predominate over residues 8–25; that stretch reads FXKNNPXSTRVAANSXRS.

Its function is as follows. Inhibits trypsin and the toxin protease PR2 of M.anisopliae. Does not inhibit chymotrypsin, subtilisin Carlsberg, proteinase K, porcine pancreatic elastase and the toxin protease PR1 of M.anisopliae. The polypeptide is Inducible serine protease inhibitor 1 (Galleria mellonella (Greater wax moth)).